A 1154-amino-acid chain; its full sequence is MAVLSLVELCFISIMERMEYNNQALQKIPPQLIERLINFMVYKLPPNHLSLQTISKPIRIKLVRQNRVITMRFSIYNTIDKIIHQIYERIINEEKMEQNEKQKNSSNNNLLSLLTLNNNNQNNNSSIITTTTTTTNNNNNSNCGSSSSSSSSKQILWGSIENYGLFQQSGSFRNARWLQLDKTLAYYEIDSNETLEFKTCKSVLKIRFFGPWERVVHPLHQSTMLDETIKTFVFDESKTVSEISMELAKKLQLKYPEELSLKVQCEEEDDGRGIWLSADLTLPEQGIDPLYTIFLLKRQFFFCKDIIIDFSMDAEMLHFVFCQCLDAIIDTSHPCSPTESILFAALQCQICFGDYVHGSKEIDQIRQRDFLPMEFINQKNILKEILIQYQRLIGMSEQKAKLNYIQLAKSLKTYGYTFFKVTNRQTSIVNNNLSSSGGSGNGSGSGNGSSSSSSNSSSGNNNNHNHHNHQQLFGISSEAVLTLDPMTNNTISLYSLSNIRKWHVLNNVFTIEYNDRKDTFISMEAEAISHVLSSYIHHNLRETPSIQKQWDQNYLSVSGRNSLTNGRKRLSTCSNCSSDSMEFDSSKSNTKDKDWKYQYGLVIKKCALYIEPKKLYINPLSTQITGSMVNKELNKDTKVTKVLKVLTDLSSKMILSFSKSSPAKEREIVVKFSDKKVKSFVVDEQKTVSEITQEIGLKLGIKNPEEFSLQLIVNNKNNNNNNNSNNSSTSSSSSSSVNNSGIFDGLNNSNVNNVFYNSYIVNSSISNNSNSNSNSNILNNSNDEQSTSTSTSSSLGGIWLKPYQPLSEQSISPDSKLLFKKKFYTSDIGAADDCNSDPVYFNLLFFQSKDAIISNTYTCSKEEAIQLAATLFQINFGDHNPNIHKPGFLKSQDLKFFLPPNSLELWGLSFQKIEKSIYKEHQNLRGIKEVYAKYRYVQLCRSLKTFGAIFFSVRQLLPNKTNGSSSSSSNNNGGNSNNGINGNGIITGGNGGSGGGGSGIGGNGSGINTGGNGFGGSQQIPINQPLVLGFSRKCILFMTAKTKKFLVEYPLTHLRRWAYHKDTQCLTLDFGDYEMGRIVLQTTESEEISSYLSDYIDYIQTKLVGSQSFSRSIFNSDNNSSSFFSNSFCNNTTTTTTTTTTTTTTTTTTTTNNV.

Disordered stretches follow at residues 122 to 149, 432 to 468, 715 to 734, 771 to 794, and 961 to 980; these read NNNS…SSSS, NLSS…NHHN, NKNN…SSSS, SNSN…TSSS, and TNGS…NNGI. FERM domains lie at 218–547 and 666–1103; these read PLHQ…PSIQ and REIV…QTKL. The span at 437-447 shows a compositional bias: gly residues; the sequence is GGSGNGSGSGN. Low complexity predominate over residues 448 to 463; it reads GSSSSSSNSSSGNNNN.

In terms of biological role, key regulator of adhesion dynamics, it acts as an anti-adhesive. Plays a critical role in the regulation of cell-cell adhesion, multi-cellular development and, in particular, the formation of the organising center known as the tip. Required for turnover of paxillin-adhesion sites during cell migration. Plays a major role in normal cell shape, cell-substrate adhesion and actin cytoskeleton organization. This is FERM domain-containing protein A (frmA) from Dictyostelium discoideum (Social amoeba).